Reading from the N-terminus, the 86-residue chain is MPQFQTWEEFSRAAEKLYLADPMKVRVVLKYRHVDGNLCIKVTDDLVCLVYRTDQAQDVKKIEKFHSQLMRLMVAKESRNVTMETE.

It belongs to the SRP9 family. Heterodimer with SRP14; binds RNA as heterodimer. Component of a signal recognition particle complex that consists of a 7SL RNA molecule of 300 nucleotides and six protein subunits: SRP72, SRP68, SRP54, SRP19, SRP14 and SRP9.

It is found in the cytoplasm. Component of the signal recognition particle (SRP) complex, a ribonucleoprotein complex that mediates the cotranslational targeting of secretory and membrane proteins to the endoplasmic reticulum (ER). SRP9 together with SRP14 and the Alu portion of the SRP RNA, constitutes the elongation arrest domain of SRP. The complex of SRP9 and SRP14 is required for SRP RNA binding. This chain is Signal recognition particle 9 kDa protein (Srp9), found in Mus musculus (Mouse).